Consider the following 31-residue polypeptide: Cyclotide mech-5 (31 aa).

Residues 1-31 (GVIPCGESCVFIPCISSVVGCTCKNKVCYRD) constitute a cross-link (cyclopeptide (Gly-Asp)). Cystine bridges form between Cys-5-Cys-21, Cys-9-Cys-23, and Cys-14-Cys-28.

In terms of processing, this is a cyclic peptide. Post-translationally, contains 3 disulfide bonds.

Probably participates in a plant defense mechanism (Potential). Binds to and induces leakage in phospholipd membranes, particularly ones containing 1-palmitoyl-2-oleophosphatidylethanolamine (POPE). The chain is Cyclotide mech-5 from Melicytus chathamicus (Chatham Island mahoe).